The primary structure comprises 501 residues: METRELWVLAAALAVSLLYYLAALMRYAGGGCSRSSRPPLPPGPTPLPLIGNLLSLRGVLHHRLASLARVHGPVMALRLGLTTAVVVSSRDAAAEAFTKHDRRLAARVVPDSNRAHGFSDRSIIWLPSSDPRWKALRGIQATHLFSPRGLAAVRSVRESKVRDIVAYFRSRAGEEVVFGEAIYSGVLNLVSSSFFSVNMAGVGSEEAHGLRELVEDLVEAIAKPNVSDLFPFLRQLDLQGLRRRTEERMARAFGILDGIIDRRLANRTHGDRHGDFLDALLDLVSEGKMARDHVTIMLFEVFGAGSDTMSVSLEWAMAELLRNPRAMRKARAELEDAAAVVEESDAARLPYLQAVVKEAMRLHPVGPILLPHRAVEDGVEIGGYAVPRGAMVIFNAWAIMRDPAAWERPDEFVPERFMETTTAIDFRGKEYEYLPFGSGRRLCPGLPLAERVVPFVLASLLRAFEWRLPDGVSAEDLDVSERFNTANVLAVPLKVVPVIVN.

The helical transmembrane segment at 5–25 (ELWVLAAALAVSLLYYLAALM) threads the bilayer. Heme is bound at residue C443.

It belongs to the cytochrome P450 family. The cofactor is heme.

The protein resides in the membrane. It carries out the reaction ent-sandaracopimaradien-3beta-ol + reduced [NADPH--hemoprotein reductase] + O2 = oryzalexin E + oxidized [NADPH--hemoprotein reductase] + H2O + H(+). In terms of biological role, enzyme of the diterpenoid metabolism involved in the biosynthesis of the oryzalexin class of phytoalexins. Hydroxylates ent-sandaracopimaradien. This Oryza sativa subsp. japonica (Rice) protein is Cytochrome P450 76M5.